The primary structure comprises 371 residues: GTPase Obg (371 aa).

The Obg domain maps to Met1–Leu159. In terms of domain architecture, OBG-type G spans Ala160 to His334. Residues Gly166 to Ser173, Phe191 to His195, Asp213 to Gly216, Asn284 to Asp287, and Ser315 to Leu317 each bind GTP. Mg(2+) is bound by residues Ser173 and Thr193.

This sequence belongs to the TRAFAC class OBG-HflX-like GTPase superfamily. OBG GTPase family. In terms of assembly, monomer. Mg(2+) serves as cofactor.

It is found in the cytoplasm. In terms of biological role, an essential GTPase which binds GTP, GDP and possibly (p)ppGpp with moderate affinity, with high nucleotide exchange rates and a fairly low GTP hydrolysis rate. Plays a role in control of the cell cycle, stress response, ribosome biogenesis and in those bacteria that undergo differentiation, in morphogenesis control. The protein is GTPase Obg of Delftia acidovorans (strain DSM 14801 / SPH-1).